A 204-amino-acid polypeptide reads, in one-letter code: Leucyl/phenylalanyl-tRNA--protein transferase (204 aa).

The protein belongs to the L/F-transferase family.

It is found in the cytoplasm. It carries out the reaction N-terminal L-lysyl-[protein] + L-leucyl-tRNA(Leu) = N-terminal L-leucyl-L-lysyl-[protein] + tRNA(Leu) + H(+). The catalysed reaction is N-terminal L-arginyl-[protein] + L-leucyl-tRNA(Leu) = N-terminal L-leucyl-L-arginyl-[protein] + tRNA(Leu) + H(+). It catalyses the reaction L-phenylalanyl-tRNA(Phe) + an N-terminal L-alpha-aminoacyl-[protein] = an N-terminal L-phenylalanyl-L-alpha-aminoacyl-[protein] + tRNA(Phe). In terms of biological role, functions in the N-end rule pathway of protein degradation where it conjugates Leu, Phe and, less efficiently, Met from aminoacyl-tRNAs to the N-termini of proteins containing an N-terminal arginine or lysine. The chain is Leucyl/phenylalanyl-tRNA--protein transferase from Rhizobium etli (strain ATCC 51251 / DSM 11541 / JCM 21823 / NBRC 15573 / CFN 42).